A 95-amino-acid polypeptide reads, in one-letter code: Protein TusB (95 aa).

It belongs to the DsrH/TusB family. Heterohexamer, formed by a dimer of trimers. The hexameric TusBCD complex contains 2 copies each of TusB, TusC and TusD. The TusBCD complex interacts with TusE.

Its subcellular location is the cytoplasm. Its function is as follows. Part of a sulfur-relay system required for 2-thiolation of 5-methylaminomethyl-2-thiouridine (mnm(5)s(2)U) at tRNA wobble positions. This Serratia proteamaculans (strain 568) protein is Protein TusB.